A 454-amino-acid chain; its full sequence is Phosphoglucosamine mutase (454 aa).

Catalysis depends on Ser102, which acts as the Phosphoserine intermediate. 4 residues coordinate Mg(2+): Ser102, Asp247, Asp249, and Asp251. A Phosphoserine modification is found at Ser102.

Belongs to the phosphohexose mutase family. The cofactor is Mg(2+). Activated by phosphorylation.

It carries out the reaction alpha-D-glucosamine 1-phosphate = D-glucosamine 6-phosphate. Functionally, catalyzes the conversion of glucosamine-6-phosphate to glucosamine-1-phosphate. The protein is Phosphoglucosamine mutase of Kineococcus radiotolerans (strain ATCC BAA-149 / DSM 14245 / SRS30216).